The chain runs to 743 residues: Alpha-N-acetylglucosaminidase (743 aa).

A signal peptide spans 1–23 (MEAVAVAAAVGVLLLAGAGGAAG). 6 N-linked (GlcNAc...) asparagine glycosylation sites follow: asparagine 261, asparagine 272, asparagine 435, asparagine 503, asparagine 526, and asparagine 532.

This sequence belongs to the glycosyl hydrolase 89 family. As to quaternary structure, monomer and homodimer. As to expression, liver, ovary, peripheral blood leukocytes, testis, prostate, spleen, colon, lung, placenta and kidney.

It is found in the lysosome. The enzyme catalyses Hydrolysis of terminal non-reducing N-acetyl-D-glucosamine residues in N-acetyl-alpha-D-glucosaminides.. Functionally, involved in the degradation of heparan sulfate. The protein is Alpha-N-acetylglucosaminidase (NAGLU) of Homo sapiens (Human).